Reading from the N-terminus, the 232-residue chain is Sugar fermentation stimulation protein homolog (232 aa).

This sequence belongs to the SfsA family.

The protein is Sugar fermentation stimulation protein homolog of Moorella thermoacetica (strain ATCC 39073 / JCM 9320).